A 384-amino-acid chain; its full sequence is 1-deoxy-D-xylulose 5-phosphate reductoisomerase (384 aa).

NADPH-binding residues include T10, G11, S12, I13, R37, N38, and N124. K125 is a binding site for 1-deoxy-D-xylulose 5-phosphate. Residue E126 participates in NADPH binding. Residue D150 coordinates Mn(2+). The 1-deoxy-D-xylulose 5-phosphate site is built by S151, E152, S176, and H199. E152 provides a ligand contact to Mn(2+). G205 contributes to the NADPH binding site. Residues S212, N217, K218, and E221 each coordinate 1-deoxy-D-xylulose 5-phosphate. A Mn(2+)-binding site is contributed by E221.

This sequence belongs to the DXR family. Mg(2+) serves as cofactor. It depends on Mn(2+) as a cofactor.

The enzyme catalyses 2-C-methyl-D-erythritol 4-phosphate + NADP(+) = 1-deoxy-D-xylulose 5-phosphate + NADPH + H(+). It functions in the pathway isoprenoid biosynthesis; isopentenyl diphosphate biosynthesis via DXP pathway; isopentenyl diphosphate from 1-deoxy-D-xylulose 5-phosphate: step 1/6. Catalyzes the NADPH-dependent rearrangement and reduction of 1-deoxy-D-xylulose-5-phosphate (DXP) to 2-C-methyl-D-erythritol 4-phosphate (MEP). The protein is 1-deoxy-D-xylulose 5-phosphate reductoisomerase of Clostridium perfringens (strain ATCC 13124 / DSM 756 / JCM 1290 / NCIMB 6125 / NCTC 8237 / Type A).